Consider the following 477-residue polypeptide: Phosphomethylpyrimidine synthase (477 aa).

Residues Asn67, Met96, Tyr125, His160, 180-182 (SRG), 221-224 (DGLR), and Glu260 each bind substrate. His264 is a Zn(2+) binding site. Tyr287 serves as a coordination point for substrate. His328 is a Zn(2+) binding site. 3 residues coordinate [4Fe-4S] cluster: Cys408, Cys411, and Cys416. Over residues 427–440 (AGDGMDGLESRTDL) the composition is skewed to basic and acidic residues. A disordered region spans residues 427–477 (AGDGMDGLESRTDLDSSAAAAVNRPPTGVHRAEKLDDIPCPVAEDDVAADD).

This sequence belongs to the ThiC family. Requires [4Fe-4S] cluster as cofactor.

It carries out the reaction 5-amino-1-(5-phospho-beta-D-ribosyl)imidazole + S-adenosyl-L-methionine = 4-amino-2-methyl-5-(phosphooxymethyl)pyrimidine + CO + 5'-deoxyadenosine + formate + L-methionine + 3 H(+). Its pathway is cofactor biosynthesis; thiamine diphosphate biosynthesis. Its function is as follows. Catalyzes the synthesis of the hydroxymethylpyrimidine phosphate (HMP-P) moiety of thiamine from aminoimidazole ribotide (AIR) in a radical S-adenosyl-L-methionine (SAM)-dependent reaction. This Natronomonas pharaonis (strain ATCC 35678 / DSM 2160 / CIP 103997 / JCM 8858 / NBRC 14720 / NCIMB 2260 / Gabara) (Halobacterium pharaonis) protein is Phosphomethylpyrimidine synthase.